The following is a 953-amino-acid chain: Kinesin-like protein KIF23 (953 aa).

The Nuclear localization signal signature appears at 7-11 (KTVRK). The Kinesin motor domain occupies 25–436 (PVGVYCRVRP…MRFAEVTQEV (412 aa)). 112–119 (GVTGSGKT) contributes to the ATP binding site. Phosphoserine is present on residues Ser-155 and Ser-160. The stretch at 542–618 (QEKLNEREKV…RRLEARLQGM (77 aa)) forms a coiled coil. Glycyl lysine isopeptide (Lys-Gly) (interchain with G-Cter in SUMO2) cross-links involve residues Lys-572 and Lys-587. Ser-606 is modified (phosphoserine). Residues Lys-625, Lys-648, Lys-663, and Lys-666 each participate in a glycyl lysine isopeptide (Lys-Gly) (interchain with G-Cter in SUMO2) cross-link. Residues 658 to 695 (IVTEPKPEKPERPSRERDREKIIPRSVSPSPLPLSSNN) form a disordered region. The span at 662–680 (PKPEKPERPSRERDREKII) shows a compositional bias: basic and acidic residues. Over residues 681–693 (PRSVSPSPLPLSS) the composition is skewed to low complexity. Phosphoserine is present on residues Ser-683 and Ser-685. Thr-739 bears the Phosphothreonine mark. At Ser-807 the chain carries Phosphoserine. Glycyl lysine isopeptide (Lys-Gly) (interchain with G-Cter in SUMO2) cross-links involve residues Lys-816 and Lys-847. At Ser-860 the chain carries Phosphoserine. Glycyl lysine isopeptide (Lys-Gly) (interchain with G-Cter in SUMO2) cross-links involve residues Lys-867, Lys-870, and Lys-892. Disordered regions lie at residues 894–921 (ELPT…EWTD) and 934–953 (AGSQ…RKKP). Ser-904 carries the post-translational modification Phosphoserine. Residue Thr-920 is modified to Phosphothreonine. A Glycyl lysine isopeptide (Lys-Gly) (interchain with G-Cter in SUMO2) cross-link involves residue Lys-949.

This sequence belongs to the TRAFAC class myosin-kinesin ATPase superfamily. Kinesin family. Heterotetramer of two molecules each of RACGAP1 and KIF23. Found in the centralspindlin complex. Interacts with RACGAP1; the interaction is direct. Interacts with ECT2 and PRC1. Interacts with ANXA11 during cytokinesis. Interacts with BIRC6/bruce and USP8/UBPY. Interacts with ARF6, forming heterodimers and heterotetramers. Post-translationally, ubiquitinated. Deubiquitinated by USP8/UBPY. Detected in testis and ovary from newborn mice (at protein level). Detected in brain, spinal cord and small intestine.

It is found in the nucleus. It localises to the cytoplasm. The protein resides in the cytoskeleton. Its subcellular location is the spindle. The protein localises to the midbody. It is found in the midbody ring. Functionally, component of the centralspindlin complex that serves as a microtubule-dependent and Rho-mediated signaling required for the myosin contractile ring formation during the cell cycle cytokinesis. Essential for cytokinesis in Rho-mediated signaling. Required for the localization of ECT2 to the central spindle. Plus-end-directed motor enzyme that moves antiparallel microtubules in vitro. This is Kinesin-like protein KIF23 (Kif23) from Mus musculus (Mouse).